A 342-amino-acid chain; its full sequence is MLEISPWETLVKLLTDSLLNCTGTHEDVPHAKTFLRSLTTTYIASLAVATAVTVGTVCLAVLHLIYIHFYITHSSRRLHIVLLACTAPLVSLLALVAMYMPRVWFLSHLLSFLYFSFALWVIICLLLHIFDGHHALVTKMMQRLQYVEIATPPFCCLFPCLPKVRLEGKKIRWCELMVMQAPIVRLFATLVSLVIYFEYQDQGLVPLKVLDFITLPSLLAGIYGTHILVTTVSRMDELISYRYVVVFRLLDFFFMVFGLQQPVFDFLARYGAFGCGTVLPAIETSFYWKNFFTVIEAFCVTLISTVLLQPSKSSFFDKHPSCRSMSSARSTITDVDTDESTT.

Topologically, residues methionine 1–threonine 50 are extracellular. N-linked (GlcNAc...) asparagine glycosylation is present at asparagine 20. Residues alanine 51 to isoleucine 71 form a helical membrane-spanning segment. The Cytoplasmic portion of the chain corresponds to threonine 72–histidine 79. A helical membrane pass occupies residues isoleucine 80–methionine 100. The Extracellular segment spans residues proline 101–leucine 109. Residues leucine 110 to phenylalanine 130 form a helical membrane-spanning segment. Over aspartate 131–leucine 176 the chain is Cytoplasmic. Residues methionine 177–phenylalanine 197 traverse the membrane as a helical segment. At glutamate 198–lysine 208 the chain is on the extracellular side. The chain crosses the membrane as a helical span at residues valine 209–valine 229. Residues threonine 230–tyrosine 243 are Cytoplasmic-facing. A helical membrane pass occupies residues valine 244 to phenylalanine 264. Over aspartate 265–asparagine 290 the chain is Extracellular. A helical transmembrane segment spans residues phenylalanine 291–serine 311. Over lysine 312 to threonine 342 the chain is Cytoplasmic.

The protein belongs to the OST-alpha family.

It is found in the cell membrane. In terms of biological role, probable transporter. This chain is Organic solute transporter alpha-like protein 2 (osta-2), found in Caenorhabditis elegans.